The chain runs to 365 residues: Peptide chain release factor 2 (365 aa).

Glutamine 252 bears the N5-methylglutamine mark.

The protein belongs to the prokaryotic/mitochondrial release factor family. Post-translationally, methylated by PrmC. Methylation increases the termination efficiency of RF2.

The protein resides in the cytoplasm. Peptide chain release factor 2 directs the termination of translation in response to the peptide chain termination codons UGA and UAA. The sequence is that of Peptide chain release factor 2 from Pseudoalteromonas translucida (strain TAC 125).